Consider the following 179-residue polypeptide: Large ribosomal subunit protein uL6 (179 aa).

Belongs to the universal ribosomal protein uL6 family. Part of the 50S ribosomal subunit.

Functionally, this protein binds to the 23S rRNA, and is important in its secondary structure. It is located near the subunit interface in the base of the L7/L12 stalk, and near the tRNA binding site of the peptidyltransferase center. The polypeptide is Large ribosomal subunit protein uL6 (Legionella pneumophila (strain Paris)).